The following is a 278-amino-acid chain: MSALGSPVRAYDFLLKFLLVGDSDVGKGEILASLQDGAAESPYGHPAGIDYKTTTILLDGRRVKLQLWDTSGQGRFCTIFRSYSRGAQGVILVYDIANRWSFDGIDRWIKEIDEHAPGVPKILVGNRLHLAFKRQVPTEQAQAYAERLGVTFFEVSPLCNFNITESFTELARIVLLRHGMDRLWRPSKVLSLQDLCCRAVVSCTPVHLVDKLPLPIALRSHLKSFSMANGLNARMMHGGSYSLTTSSTHKRSSLRKVKLVRPPQSPPKNCTRNSCKIS.

3 residues coordinate GTP: S23, G26, and K27. The switch-I stretch occupies residues 41–49; that stretch reads SPYGHPAGI. D69 serves as a coordination point for Mg(2+). Residues G72, N126, and R127 each coordinate GTP. The interval 72–88 is switch-II; that stretch reads GQGRFCTIFRSYSRGAQ. Residues 175–228 enclose the SOCS box domain; that stretch reads LLRHGMDRLWRPSKVLSLQDLCCRAVVSCTPVHLVDKLPLPIALRSHLKSFSMA. Residues 242–278 are disordered; the sequence is SLTTSSTHKRSSLRKVKLVRPPQSPPKNCTRNSCKIS. Residues 248–259 show a composition bias toward basic residues; it reads THKRSSLRKVKL. Polar residues predominate over residues 267–278; it reads PKNCTRNSCKIS. Residue C270 is the site of S-palmitoyl cysteine attachment. C275 is lipidated: S-geranylgeranyl cysteine.

Belongs to the small GTPase superfamily. Rab family. In terms of assembly, component of the cullin-5-RING E3 ubiquitin-protein ligase complex (ECS(RAB40B) complex) composed of CUL5, Elongin BC (ELOB and ELOC), RNF7/RBX2 and RAB40B; RAB40B interaction with ECS complex is GTP-independent. Binds (GTP-bound) LIMA1; interaction promotes LIMA1 subcellular localization in lamellipodia during cell migration. Interacts (GTP-bound) with TKS5/SH3PXD2A (via PX domain); interaction promotes invadopodia-mediated extracellular matrix degradation. It depends on Mg(2+) as a cofactor.

It localises to the cell membrane. The protein localises to the cytoplasm. Its subcellular location is the cytosol. It is found in the cell projection. The protein resides in the lamellipodium membrane. It localises to the ruffle. It carries out the reaction GTP + H2O = GDP + phosphate + H(+). It functions in the pathway protein modification; protein ubiquitination. With respect to regulation, regulated by guanine nucleotide exchange factors (GEFs) which promote the exchange of bound GDP for free GTP. Regulated by GTPase activating proteins (GAPs) which increase the GTP hydrolysis activity. Inhibited by GDP dissociation inhibitors (GDIs). Functionally, RAB40B small GTPase acts as substrate-recognition components of the ECS(RAB40B) E3 ubiquitin ligase complex which mediates the ubiquitination of target proteins. The Rab40 subfamily belongs to the Rab family that are key regulators of intracellular membrane trafficking, from the formation of transport vesicles to their fusion with membranes. Rabs cycle between an inactive GDP-bound form and an active GTP-bound form that is able to recruit to membranes different sets of downstream effectors directly responsible for vesicle formation, movement, tethering and fusion. As part of the ECS(RAB40B) complex, GTP-bound RAB40B promotes LIMA1/EPLIN ubiquitination and degradation, thereby regulating leading-edge actin dynamics during cell migration. As part of the ECS(RAB40B) complex, GTP-bound RAB40B also ubiquitinates RAP2A GTPase which promotes its localization to lamellipodia and activation to drive cell migration. The ECS(RAB40B) complex does not mediate canonical ubiquitin-dependent degradation of RAP2. RAB40B also binds TKS5/SH3PXD2A effector independently from ECS complex to promote invadopodia-mediated extracellular matrix degradation. The chain is Ras-related protein Rab-40B from Homo sapiens (Human).